We begin with the raw amino-acid sequence, 139 residues long: Histone H2B (139 aa).

The span at 1–10 (MAPKAAEKKP) shows a compositional bias: basic and acidic residues. Residues 1–47 (MAPKAAEKKPSTGGKAPAGGKAPAEKKEAGKKTAASGEKKKRTKARK) form a disordered region. Lys-8 and Lys-9 each carry N6-acetyllysine; alternate. Glycyl lysine isopeptide (Lys-Gly) (interchain with G-Cter in SUMO); alternate cross-links involve residues Lys-8 and Lys-9. The span at 11 to 22 (STGGKAPAGGKA) shows a compositional bias: low complexity. Lys-15 is modified (N6-acetyllysine). An N6-acetyllysine; alternate modification is found at Lys-26. Residue Lys-26 forms a Glycyl lysine isopeptide (Lys-Gly) (interchain with G-Cter in SUMO); alternate linkage. A Glycyl lysine isopeptide (Lys-Gly) (interchain with G-Cter in SUMO) cross-link involves residue Lys-27. Lys-133 participates in a covalent cross-link: Glycyl lysine isopeptide (Lys-Gly) (interchain with G-Cter in ubiquitin).

This sequence belongs to the histone H2B family. In terms of assembly, the nucleosome is a histone octamer containing two molecules each of H2A, H2B, H3 and H4 assembled in one H3-H4 heterotetramer and two H2A-H2B heterodimers. The octamer wraps approximately 147 bp of DNA. Post-translationally, monoubiquitinated by the UBC2-BRE1 complex to form H2BK123ub1. H2BK123ub1 gives a specific tag for epigenetic transcriptional activation and is also prerequisite for H3K4me and H3K79me formation. H2BK123ub1 also modulates the formation of double-strand breaks during meiosis and is a prerequisite for DNA-damage checkpoint activation. In terms of processing, acetylated by GCN5 to form H2BK11ac and H2BK16ac. H2BK16ac can also be formed by ESA1. Acetylation of N-terminal lysines and particularly formation of H2BK11acK16ac has a positive effect on transcription. Sumoylation to form H2BK6su or H2BK7su, and probably also H2BK16su or H2BK17su, occurs preferentially near the telomeres and represses gene transcription.

The protein resides in the nucleus. Its subcellular location is the chromosome. Core component of nucleosome. Nucleosomes wrap and compact DNA into chromatin, limiting DNA accessibility to the cellular machineries which require DNA as a template. Histones thereby play a central role in transcription regulation, DNA repair, DNA replication and chromosomal stability. DNA accessibility is regulated via a complex set of post-translational modifications of histones, also called histone code, and nucleosome remodeling. The polypeptide is Histone H2B (HTB1) (Coccidioides immitis (strain RS) (Valley fever fungus)).